The following is an 81-amino-acid chain: Putative defensin-like protein 31 (81 aa).

The N-terminal stretch at methionine 1–alanine 26 is a signal peptide. 3 disulfides stabilise this stretch: cysteine 38/cysteine 58, cysteine 44/cysteine 70, and cysteine 48/cysteine 72.

It belongs to the DEFL family.

It is found in the secreted. The sequence is that of Putative defensin-like protein 31 from Arabidopsis thaliana (Mouse-ear cress).